We begin with the raw amino-acid sequence, 940 residues long: MASVLEKVLRVGEGRTLRKLQNYAKAVNQLEEDFTHLTDEELKNETVELRERHANGESLDDLLPEAFAAVREASRRTLGLRHFDVQIMGGAALHLGNIAEMKTGEGKTLVATLPAYLNAIASRGVHVITVNDYLASYQSELMGRVFRALGMTTGVILAGQTPQQRREQYAADITYGTNNEFGFDYLRDNMAWQASDMVQRGHFFAVVDEVDSILIDEARTPLIISGPSAGDANRWFTEFANVAKRLVPEVDYEVDEKKRTVGVLETGIEKVEDHLGIDNLYESANTPLISFLNNSIKAKALFKKDKDYVVMNGEVLIVDEHTGRILMGRRYNEGIHQAIEAKEGVAVKAENQTLATVTLQNYFRLYKKLSGMTGTAETEAAEFMSTYKLGVVPIPTNRPMQRKDQSDLIYKNEKAKFEQVVEDIAERHAAGQPVLVGTTSVEKSEYLSKLLAKKGVRHEVLNAKNHAREAAIVAQAGHLGSVTVATNMAGRGTDIMLGGNAEFLAVAAMNARGLSPVETPEQYETEWDDVFAQVKAEVDEEAAKVIEAGGLYVLGTERHESRRIDNQLRGRSGRQGDPGESRFYLSLTDDLMRLFNNGAAASLMGRDSVPDDVAIESKVVSRAIRSAQGQVEARNAEIRKNVLKYDDVLNRQREAIYGDRRHILEGDDLQERSQRFLEAVIDDVLDSHIGEGNGDDWDFDALWTELKTLYPISITIDEVITEAGSKGRVNRDFVRREILSDAKLAYSKREEQLGEAAMRELERRVVLSVIDRRWREHLYEMDYLKDGIGLRAMAQRDPLVEYQREGFALFQQMMGAIREETVGFLFNLEVEVQAPADAESVGPRIQAKGLAANQATADKLRYTAPTDDGGVEVRNQRGQIEKAATAKAQKDQQAEDAVLVGEDEPETPQGPPARGAFGQPTGASSAPQNREERRKADRRK.

Residues Gln-86, 104–108 (GEGKT), and Asp-494 contribute to the ATP site. A disordered region spans residues 884–940 (ATAKAQKDQQAEDAVLVGEDEPETPQGPPARGAFGQPTGASSAPQNREERRKADRRK). The segment covering 929 to 940 (NREERRKADRRK) has biased composition (basic and acidic residues).

This sequence belongs to the SecA family. In terms of assembly, monomer and homodimer. Part of the essential Sec protein translocation apparatus which comprises SecA, SecYEG and auxiliary proteins SecDF. Other proteins may also be involved.

It localises to the cell membrane. The protein resides in the cytoplasm. The enzyme catalyses ATP + H2O + cellular proteinSide 1 = ADP + phosphate + cellular proteinSide 2.. Part of the Sec protein translocase complex. Interacts with the SecYEG preprotein conducting channel. Has a central role in coupling the hydrolysis of ATP to the transfer of proteins into and across the cell membrane, serving as an ATP-driven molecular motor driving the stepwise translocation of polypeptide chains across the membrane. This chain is Protein translocase subunit SecA, found in Clavibacter sepedonicus (Clavibacter michiganensis subsp. sepedonicus).